The following is a 725-amino-acid chain: Peroxisomal fatty acid beta-oxidation multifunctional protein MFP2 (725 aa).

Glu119 functions as the Nucleophile in the catalytic mechanism. Glu139 functions as the Proton acceptor in the catalytic mechanism. The short motif at 723-725 (SRL) is the Microbody targeting signal element.

In the N-terminal section; belongs to the enoyl-CoA hydratase/isomerase family. The protein in the central section; belongs to the 3-hydroxyacyl-CoA dehydrogenase family. In terms of tissue distribution, highly expressed in senescing leaves and at lower levels in flowers and siliques.

It is found in the glyoxysome. The protein resides in the peroxisome. It catalyses the reaction a (3S)-3-hydroxyacyl-CoA = a (2E)-enoyl-CoA + H2O. It carries out the reaction a 4-saturated-(3S)-3-hydroxyacyl-CoA = a (3E)-enoyl-CoA + H2O. The catalysed reaction is (3S)-3-hydroxybutanoyl-CoA = (2E)-butenoyl-CoA + H2O. The enzyme catalyses (3S)-hydroxyoctanoyl-CoA = (2E)-octenoyl-CoA + H2O. It catalyses the reaction (3S)-3-hydroxydodecanoyl-CoA = (2E)-dodecenoyl-CoA + H2O. It carries out the reaction (3S)-hydroxytetradecanoyl-CoA = (2E)-tetradecenoyl-CoA + H2O. The catalysed reaction is (3S)-hydroxyhexanoyl-CoA = (2E)-hexenoyl-CoA + H2O. The enzyme catalyses a (3Z)-enoyl-CoA = a 4-saturated (2E)-enoyl-CoA. It catalyses the reaction a (3E)-enoyl-CoA = a 4-saturated (2E)-enoyl-CoA. It carries out the reaction (3S)-3-hydroxybutanoyl-CoA = (3R)-3-hydroxybutanoyl-CoA. The catalysed reaction is a (3S)-3-hydroxyacyl-CoA + NAD(+) = a 3-oxoacyl-CoA + NADH + H(+). The enzyme catalyses (3S)-3-hydroxybutanoyl-CoA + NAD(+) = acetoacetyl-CoA + NADH + H(+). It catalyses the reaction (3S)-hydroxyhexanoyl-CoA + NAD(+) = 3-oxohexanoyl-CoA + NADH + H(+). It carries out the reaction (3S)-hydroxyoctanoyl-CoA + NAD(+) = 3-oxooctanoyl-CoA + NADH + H(+). The catalysed reaction is (3S)-3-hydroxydodecanoyl-CoA + NAD(+) = 3-oxododecanoyl-CoA + NADH + H(+). The enzyme catalyses (3S)-hydroxytetradecanoyl-CoA + NAD(+) = 3-oxotetradecanoyl-CoA + NADH + H(+). The protein operates within lipid metabolism; fatty acid beta-oxidation. Its function is as follows. Involved in peroxisomal fatty acid beta-oxidation during seed germination. Possesses enoyl-CoA hydratase activity against long chain substrates (C14-C18) and 3-hydroxyacyl-CoA dehydrogenase activity against chains of variable sizes (C6-C18). Possesses 3-hydroxy-3-phenylpropionyl-CoA dehydrogenase activity and is involved in the peroxisomal beta-oxidation pathway for the biosynthesis of benzoic acid (BA). Required for the accumulation in seeds of substituted hydroxybenzoylated choline esters, which are BA-containing secondary metabolites. Fatty acid beta-oxidation pathway in peroxisomes regulates gene silencing, histone acetylation and DNA methylation. This chain is Peroxisomal fatty acid beta-oxidation multifunctional protein MFP2, found in Arabidopsis thaliana (Mouse-ear cress).